Reading from the N-terminus, the 258-residue chain is Elongation factor Ts (258 aa).

The involved in Mg(2+) ion dislocation from EF-Tu stretch occupies residues 81-84 (TDFV). The tract at residues 216–258 (GLKPAEAPKVEETPPAPPEEPAPEPAPAAESKPAKKGSAKKKK) is disordered. Pro residues predominate over residues 229–241 (PPAPPEEPAPEPA). The span at 249 to 258 (AKKGSAKKKK) shows a compositional bias: basic residues.

It belongs to the EF-Ts family.

The protein resides in the cytoplasm. In terms of biological role, associates with the EF-Tu.GDP complex and induces the exchange of GDP to GTP. It remains bound to the aminoacyl-tRNA.EF-Tu.GTP complex up to the GTP hydrolysis stage on the ribosome. This is Elongation factor Ts from Synechococcus sp. (strain JA-2-3B'a(2-13)) (Cyanobacteria bacterium Yellowstone B-Prime).